A 183-amino-acid chain; its full sequence is Mast cell-expressed membrane protein 1 (183 aa).

The disordered stretch occupies residues 1–26; it reads MHASASQDKNRRKPGHDEGAHNPDYE. Topologically, residues 1–70 are cytoplasmic; it reads MHASASQDKN…PPWLYRTIMM (70 aa). Residues 15 to 24 are compositionally biased toward basic and acidic residues; it reads GHDEGAHNPD. Residues 71 to 91 form a helical; Signal-anchor for type II membrane protein membrane-spanning segment; sequence LYVLLALVFLSCIVLSALVLV. Residues 92 to 183 lie on the Extracellular side of the membrane; sequence KNSEMSKELW…EKKAQPQPST (92 aa). Asn-109 is a glycosylation site (N-linked (GlcNAc...) asparagine).

It is found in the membrane. The polypeptide is Mast cell-expressed membrane protein 1 (Mus musculus (Mouse)).